A 359-amino-acid polypeptide reads, in one-letter code: Type-1 angiotensin II receptor (359 aa).

Residues 1–25 (MVPNYSTEETVKRIHVDCPVSGRHS) are Extracellular-facing. The N-linked (GlcNAc...) asparagine glycan is linked to Asn4. Asp17 contacts angiotensin II. 2 disulfide bridges follow: Cys18–Cys274 and Cys101–Cys180. A helical transmembrane segment spans residues 26–55 (YIYIMVPTVYSIIFIIGIFGNSLVVIVIYC). Topologically, residues 56-61 (YMKLKT) are cytoplasmic. A helical membrane pass occupies residues 62-89 (VASIFLLNLALADLCFLITLPLWAAYTA). At 90–98 (MEYQWPFGN) the chain is on the extracellular side. Residues 99-125 (CLCKLASAGISFNLYASVFLLTCLSID) form a helical membrane-spanning segment. The Cytoplasmic segment spans residues 126–141 (RYLAIVHPVKSRIRRT). A helical membrane pass occupies residues 142–165 (MFVARVTCIVIWLLAGVASLPVII). Topologically, residues 166–190 (HRNIFFAENLNMTVCGFRYDNNNTT) are extracellular. Residue Arg167 coordinates angiotensin II. The N-linked (GlcNAc...) asparagine glycan is linked to Asn176. Residues Phe182 and Tyr184 each contribute to the angiotensin II site. Residues Asn187 and Asn188 are each glycosylated (N-linked (GlcNAc...) asparagine). The chain crosses the membrane as a helical span at residues 191-216 (LRVGLGLSKNLLGFLIPFLIILTSYT). Position 199 (Lys199) interacts with angiotensin II. The Cytoplasmic portion of the chain corresponds to 217-239 (LIWKTLKKAYQIQRNKTRNDDIF). Residues 240–268 (KMIVAIVFFFFFSWIPHQVFTFLDVLIQL) traverse the membrane as a helical segment. The Extracellular segment spans residues 269 to 278 (HVITDCKITD). A helical transmembrane segment spans residues 279–304 (IVDTAMPFTICIAYFNNCLNPFFYVF). At 305–359 (FGKNFKKYFLQLIKYIPPNVSTHPSLTTKMSSLSYRPPENIRLPTKKTAGSFDTE) the chain is on the cytoplasmic side.

The protein belongs to the G-protein coupled receptor 1 family. In terms of processing, C-terminal Ser or Thr residues may be phosphorylated. As to expression, adrenal medulla.

The protein resides in the cell membrane. Functionally, receptor for angiotensin II, a vasoconstricting peptide, which acts as a key regulator of blood pressure and sodium retention by the kidney. The activated receptor in turn couples to G-alpha proteins G(q) (GNAQ, GNA11, GNA14 or GNA15) and thus activates phospholipase C and increases the cytosolic Ca(2+) concentrations, which in turn triggers cellular responses such as stimulation of protein kinase C. This Meleagris gallopavo (Wild turkey) protein is Type-1 angiotensin II receptor (AGTR1).